A 364-amino-acid polypeptide reads, in one-letter code: Probable dual-specificity RNA methyltransferase RlmN (364 aa).

E107 (proton acceptor) is an active-site residue. A Radical SAM core domain is found at 113 to 346 (HEYGNSVCVT…ATIRREQGSD (234 aa)). Residues C120 and C351 are joined by a disulfide bond. 3 residues coordinate [4Fe-4S] cluster: C127, C131, and C134. S-adenosyl-L-methionine is bound by residues 177 to 178 (GE), S209, 232 to 234 (SLH), and N308. C351 (S-methylcysteine intermediate) is an active-site residue.

This sequence belongs to the radical SAM superfamily. RlmN family. The cofactor is [4Fe-4S] cluster.

The protein localises to the cytoplasm. It carries out the reaction adenosine(2503) in 23S rRNA + 2 reduced [2Fe-2S]-[ferredoxin] + 2 S-adenosyl-L-methionine = 2-methyladenosine(2503) in 23S rRNA + 5'-deoxyadenosine + L-methionine + 2 oxidized [2Fe-2S]-[ferredoxin] + S-adenosyl-L-homocysteine. The enzyme catalyses adenosine(37) in tRNA + 2 reduced [2Fe-2S]-[ferredoxin] + 2 S-adenosyl-L-methionine = 2-methyladenosine(37) in tRNA + 5'-deoxyadenosine + L-methionine + 2 oxidized [2Fe-2S]-[ferredoxin] + S-adenosyl-L-homocysteine. Functionally, specifically methylates position 2 of adenine 2503 in 23S rRNA and position 2 of adenine 37 in tRNAs. Confers resistance to some classes of antibiotics. This chain is Probable dual-specificity RNA methyltransferase RlmN, found in Staphylococcus epidermidis (strain ATCC 12228 / FDA PCI 1200).